Here is a 696-residue protein sequence, read N- to C-terminus: Junctophilin-2 (696 aa).

The Cytoplasmic portion of the chain corresponds to 1–674 (MSGGRFDFDD…EVEVEEVPNT (674 aa)). MORN repeat units lie at residues 14-36 (YCGG…KGQG), 38-59 (YSGS…SGNT), 60-79 (FEGY…TKGR), 82-104 (YKGE…NSGA), 106-128 (YEGT…DGGT), and 129-151 (YQGQ…PYGM). 2 positions are modified to phosphoserine: Ser162 and Ser165. Disordered regions lie at residues 164 to 192 (SSLR…SPPV) and 246 to 273 (LSSG…AAPF). 2 MORN repeats span residues 285–307 (YMGE…SGLR) and 308–330 (YEGE…DGHR). The Bipartite nuclear localization signal motif lies at 345 to 359 (KRRVLPLKSSKVRQK). The segment at 439–664 (NSESLLEPPE…RKEVAQAKEA (226 aa)) is disordered. Residues Ser440, Ser442, and Ser462 each carry the phosphoserine modification. The span at 457–471 (ERPRESPQLHERETP) shows a compositional bias: basic and acidic residues. Thr470 carries the phosphothreonine modification. Residues 474–487 (EGGPPSPAGTPPQP) show a composition bias toward pro residues. Ser479 carries the post-translational modification Phosphoserine. At Thr483 the chain carries Phosphothreonine. The Nuclear localization signal signature appears at 488 to 492 (KRPRP). A phosphoserine mark is found at Ser527 and Ser533. Acidic residues predominate over residues 573 to 585 (PLEDEQEPEPEPE). Residues Ser593, Ser597, and Ser613 each carry the phosphoserine modification. Residues 631-644 (AEPKAKARKTEARG) show a composition bias toward basic and acidic residues. The helical; Anchor for type IV membrane protein transmembrane segment at 675-695 (VLICMVILLNIGLAILFVHLL) threads the bilayer.

The protein belongs to the junctophilin family. As to quaternary structure, interacts with TRPC3. Interacts with BAG5 and HSPA8; the interaction with HSPA8 is increased in the presence of BAG5. In terms of assembly, interacts with MEF2C. In terms of processing, proteolytically cleaved by calpain in response to cardiac stress. The major cleavage site takes place at the C-terminus and leads to the release of the Junctophilin-2 N-terminal fragment chain (JP2NT). Post-translationally, phosphorylation on Ser-165, probably by PKC, affects RYR1-mediated calcium ion release, interaction with TRPC3, and skeletal muscle myotubule development. Abundantly expressed in skeletal muscle and heart. Weak expression in stomach and lung.

Its subcellular location is the cell membrane. It localises to the sarcoplasmic reticulum membrane. The protein localises to the endoplasmic reticulum membrane. The protein resides in the nucleus. In terms of biological role, membrane-binding protein that provides a structural bridge between the plasma membrane and the sarcoplasmic reticulum and is required for normal excitation-contraction coupling in cardiomyocytes. Provides a structural foundation for functional cross-talk between the cell surface and intracellular Ca(2+) release channels by maintaining the 12-15 nm gap between the sarcolemma and the sarcoplasmic reticulum membranes in the cardiac dyads. Necessary for proper intracellular Ca(2+) signaling in cardiac myocytes via its involvement in ryanodine receptor-mediated calcium ion release. Contributes to the construction of skeletal muscle triad junctions. Transcription repressor required to safeguard against the deleterious effects of cardiac stress. Generated following cleavage of the Junctophilin-2 chain by calpain in response to cardiac stress in cardiomyocytes. Following cleavage and release from the membrane, translocates to the nucleus, binds DNA and represses expression of genes implicated in cell growth and differentiation, hypertrophy, inflammation and fibrosis. Modifies the transcription profile and thereby attenuates pathological remodeling in response to cardiac stress. Probably acts by competing with MEF2 transcription factors and TATA-binding proteins. The protein is Junctophilin-2 of Mus musculus (Mouse).